A 64-amino-acid chain; its full sequence is Translation machinery-associated protein 7B (64 aa).

Residues 1–38 form a disordered region; the sequence is MSSHEGGKKKALKQPKKQAKEMDEEEKAFKQKQKEEQK. Over residues 27–38 the composition is skewed to basic and acidic residues; sequence KAFKQKQKEEQK.

Belongs to the TMA7 family.

This Homo sapiens (Human) protein is Translation machinery-associated protein 7B.